We begin with the raw amino-acid sequence, 598 residues long: 2-succinyl-5-enolpyruvyl-6-hydroxy-3-cyclohexene-1-carboxylate synthase (598 aa).

It belongs to the TPP enzyme family. MenD subfamily. As to quaternary structure, homodimer. Mg(2+) is required as a cofactor. Requires Mn(2+) as cofactor. Thiamine diphosphate serves as cofactor.

It catalyses the reaction isochorismate + 2-oxoglutarate + H(+) = 5-enolpyruvoyl-6-hydroxy-2-succinyl-cyclohex-3-ene-1-carboxylate + CO2. It participates in quinol/quinone metabolism; 1,4-dihydroxy-2-naphthoate biosynthesis; 1,4-dihydroxy-2-naphthoate from chorismate: step 2/7. Its pathway is cofactor biosynthesis; phylloquinone biosynthesis. Its function is as follows. Catalyzes the thiamine diphosphate-dependent decarboxylation of 2-oxoglutarate and the subsequent addition of the resulting succinic semialdehyde-thiamine pyrophosphate anion to isochorismate to yield 2-succinyl-5-enolpyruvyl-6-hydroxy-3-cyclohexene-1-carboxylate (SEPHCHC). The protein is 2-succinyl-5-enolpyruvyl-6-hydroxy-3-cyclohexene-1-carboxylate synthase of Prochlorococcus marinus (strain NATL1A).